Here is a 254-residue protein sequence, read N- to C-terminus: Autophagy-related protein 5 (254 aa).

A Glycyl lysine isopeptide (Lys-Gly) (interchain with G-Cter in ATG12) cross-link involves residue Lys-102.

Belongs to the ATG5 family. Conjugated with ATG12. The ATG5-ATG12 conjugate forms a complex with several units of ATG16. The ATG12-ATG5 conjugate also associates with ATG3. Post-translationally, conjugated to ATG12; which is essential for autophagy. Conjugation with ATG12 involves ATG7 as an E1-like activating enzyme and ATG10 as an E2-like conjugating enzyme.

The protein localises to the preautophagosomal structure membrane. Functionally, involved in cytoplasm to vacuole transport (Cvt) and autophagic vesicle formation. Autophagy is essential for maintenance of amino acid levels and protein synthesis under nitrogen starvation. Required for selective autophagic degradation of the nucleus (nucleophagy). Also required for mitophagy, which eliminates defective or superfluous mitochondria in order to fulfill cellular energy requirements and prevent excess ROS production. Conjugation with ATG12, through a ubiquitin-like conjugating system involving ATG7 as an E1-like activating enzyme and ATG10 as an E2-like conjugating enzyme, is essential for its function. The ATG12-ATG5 conjugate acts as an E3-like enzyme which is required for lipidation of ATG8 and ATG8 association to the vesicle membranes. ATG12-ATG5 rearranges the ATG3 catalytic center and enhances its E2 activity. Autophagy is required for proper vegetative growth, asexual/sexual reproduction, and full virulence. Autophagy is particularly involved in the biosynthesis of deoxynivalenol (DON), an important virulence determinant. In Gibberella zeae (strain ATCC MYA-4620 / CBS 123657 / FGSC 9075 / NRRL 31084 / PH-1) (Wheat head blight fungus), this protein is Autophagy-related protein 5.